Here is a 384-residue protein sequence, read N- to C-terminus: Sphingosine 1-phosphate receptor 3 (384 aa).

The Extracellular portion of the chain corresponds to 1–34; it reads MMINPLIYLHYNYTGKLDHRPTVGTSPGTRDPKT. Residue asparagine 12 is glycosylated (N-linked (GlcNAc...) asparagine). Residues 35–55 traverse the membrane as a helical segment; that stretch reads IAFLVVCSFIILENLTVLLAI. Residues 56 to 64 are Cytoplasmic-facing; sequence WKNHRFHNR. The chain crosses the membrane as a helical span at residues 65 to 85; sequence MYFFIGNLALCDLLASVAYLV. At 86–105 the chain is on the extracellular side; sequence NLLLSGEKTLQLSPVLWFVR. A helical transmembrane segment spans residues 106–126; sequence EGSMFVTLGASIFSLLAIAIE. Residues 127–144 lie on the Cytoplasmic side of the membrane; that stretch reads RHLTMIKMRPYDASKNYR. The helical transmembrane segment at 145–165 threads the bilayer; sequence VFLLIGTCWLVAVLLGALPIL. Residues 166-186 are Extracellular-facing; the sequence is GWNCLGNLPDCSTILPLYTKK. Residues 187–207 form a helical membrane-spanning segment; that stretch reads YVAFCIIVFIVLLLAMSVLYA. The Cytoplasmic segment spans residues 208 to 235; sequence RIYILVKSSSQKVSKHRNSEHAMSLLRT. A helical transmembrane segment spans residues 236–256; that stretch reads VIIVVGVFIACWMPIFVLLLL. The Extracellular portion of the chain corresponds to 257–271; it reads DVACERPCPILYKAD. Residues 272–292 traverse the membrane as a helical segment; sequence WFIAVAVLNSAMNPIIYTLAS. Residues 293 to 384 are Cytoplasmic-facing; sequence REMRRAFLGL…REGEGGNGGR (92 aa). 2 stretches are compositionally biased toward polar residues: residues 315–325 and 336–347; these read NDSGNKQFQEP and QTHPNQSQQSSR. The segment at 315–384 is disordered; that stretch reads NDSGNKQFQE…REGEGGNGGR (70 aa). Basic and acidic residues predominate over residues 349 to 359; that stretch reads AELDREQETGH.

Belongs to the G-protein coupled receptor 1 family.

It localises to the cell membrane. Receptor for the lysosphingolipid sphingosine 1-phosphate (S1P). This is Sphingosine 1-phosphate receptor 3 (s1pr3) from Takifugu rubripes (Japanese pufferfish).